The sequence spans 265 residues: Mlc titration factor A (265 aa).

Zn(2+)-binding residues include H111, H148, H152, and E211.

The protein belongs to the MtfA family. In terms of assembly, interacts with Mlc. Zn(2+) serves as cofactor.

The protein resides in the cytoplasm. In terms of biological role, involved in the modulation of the activity of the glucose-phosphotransferase system (glucose-PTS). Interacts with the transcriptional repressor Mlc, preventing its interaction with DNA and leading to the modulation of expression of genes regulated by Mlc, including ptsG, which encodes the PTS system glucose-specific EIICB component. Its function is as follows. Shows zinc-dependent metallopeptidase activity. This chain is Mlc titration factor A, found in Shigella sonnei (strain Ss046).